The sequence spans 248 residues: Ureidoacrylate amidohydrolase RutB (248 aa).

Catalysis depends on D41, which acts as the Proton acceptor. K150 is an active-site residue. C183 (nucleophile) is an active-site residue.

This sequence belongs to the isochorismatase family. RutB subfamily.

The catalysed reaction is (Z)-3-ureidoacrylate + H2O + H(+) = (Z)-3-aminoacrylate + NH4(+) + CO2. It catalyses the reaction (Z)-3-ureidoacrylate + H2O = (Z)-3-aminoacrylate + carbamate + H(+). It carries out the reaction (Z)-2-methylureidoacrylate + H2O + H(+) = (Z)-2-methylaminoacrylate + NH4(+) + CO2. In terms of biological role, hydrolyzes ureidoacrylate to form aminoacrylate and carbamate. The carbamate hydrolyzes spontaneously, thereby releasing one of the nitrogen atoms of the pyrimidine ring as ammonia and one of its carbon atoms as CO2. This is Ureidoacrylate amidohydrolase RutB from Methylorubrum extorquens (strain DSM 6343 / CIP 106787 / DM4) (Methylobacterium extorquens).